Reading from the N-terminus, the 269-residue chain is 2-dehydro-3-deoxyphosphooctonate aldolase (269 aa).

Belongs to the KdsA family.

Its subcellular location is the cytoplasm. The enzyme catalyses D-arabinose 5-phosphate + phosphoenolpyruvate + H2O = 3-deoxy-alpha-D-manno-2-octulosonate-8-phosphate + phosphate. The protein operates within carbohydrate biosynthesis; 3-deoxy-D-manno-octulosonate biosynthesis; 3-deoxy-D-manno-octulosonate from D-ribulose 5-phosphate: step 2/3. It participates in bacterial outer membrane biogenesis; lipopolysaccharide biosynthesis. This is 2-dehydro-3-deoxyphosphooctonate aldolase from Chlamydia trachomatis serovar A (strain ATCC VR-571B / DSM 19440 / HAR-13).